A 375-amino-acid chain; its full sequence is 3-dehydroquinate synthase (375 aa).

NAD(+)-binding positions include 82–87 (SGETSK), 116–120 (GVVGD), 140–141 (TT), Lys-153, and Lys-162. Residues Glu-195, His-259, and His-276 each coordinate Zn(2+).

This sequence belongs to the sugar phosphate cyclases superfamily. Dehydroquinate synthase family. The cofactor is NAD(+). Requires Co(2+) as cofactor. Zn(2+) is required as a cofactor.

It localises to the cytoplasm. The enzyme catalyses 7-phospho-2-dehydro-3-deoxy-D-arabino-heptonate = 3-dehydroquinate + phosphate. The protein operates within metabolic intermediate biosynthesis; chorismate biosynthesis; chorismate from D-erythrose 4-phosphate and phosphoenolpyruvate: step 2/7. Its function is as follows. Catalyzes the conversion of 3-deoxy-D-arabino-heptulosonate 7-phosphate (DAHP) to dehydroquinate (DHQ). This chain is 3-dehydroquinate synthase, found in Rhodopirellula baltica (strain DSM 10527 / NCIMB 13988 / SH1).